Here is a 653-residue protein sequence, read N- to C-terminus: Chaperone protein HtpG (653 aa).

An a; substrate-binding region spans residues 1 to 361 (MSETNQVQNH…SNDLPLNVSR (361 aa)). A b region spans residues 362 to 578 (EILQDNKVTQ…DDDMSSQMAK (217 aa)). The segment at 579–653 (LMASVGQEVP…LNKLMLSLTK (75 aa)) is c.

It belongs to the heat shock protein 90 family. In terms of assembly, homodimer.

It is found in the cytoplasm. Its function is as follows. Molecular chaperone. Has ATPase activity. In Colwellia psychrerythraea (strain 34H / ATCC BAA-681) (Vibrio psychroerythus), this protein is Chaperone protein HtpG.